A 167-amino-acid chain; its full sequence is NAD(P)H-quinone oxidoreductase subunit I, chloroplastic (167 aa).

2 4Fe-4S ferredoxin-type domains span residues 55–84 and 95–124; these read GRIH…VDWK and LNYS…MTEE. 8 residues coordinate [4Fe-4S] cluster: cysteine 64, cysteine 67, cysteine 70, cysteine 74, cysteine 104, cysteine 107, cysteine 110, and cysteine 114.

It belongs to the complex I 23 kDa subunit family. In terms of assembly, NDH is composed of at least 16 different subunits, 5 of which are encoded in the nucleus. [4Fe-4S] cluster is required as a cofactor.

It is found in the plastid. The protein localises to the chloroplast thylakoid membrane. The catalysed reaction is a plastoquinone + NADH + (n+1) H(+)(in) = a plastoquinol + NAD(+) + n H(+)(out). It carries out the reaction a plastoquinone + NADPH + (n+1) H(+)(in) = a plastoquinol + NADP(+) + n H(+)(out). In terms of biological role, NDH shuttles electrons from NAD(P)H:plastoquinone, via FMN and iron-sulfur (Fe-S) centers, to quinones in the photosynthetic chain and possibly in a chloroplast respiratory chain. The immediate electron acceptor for the enzyme in this species is believed to be plastoquinone. Couples the redox reaction to proton translocation, and thus conserves the redox energy in a proton gradient. The sequence is that of NAD(P)H-quinone oxidoreductase subunit I, chloroplastic from Eucalyptus globulus subsp. globulus (Tasmanian blue gum).